The following is a 186-amino-acid chain: Threonylcarbamoyl-AMP synthase (186 aa).

The 185-residue stretch at 2–186 (STEFEQAVAA…ARTGAVIRPS (185 aa)) folds into the YrdC-like domain.

It belongs to the SUA5 family. TsaC subfamily.

It is found in the cytoplasm. The enzyme catalyses L-threonine + hydrogencarbonate + ATP = L-threonylcarbamoyladenylate + diphosphate + H2O. In terms of biological role, required for the formation of a threonylcarbamoyl group on adenosine at position 37 (t(6)A37) in tRNAs that read codons beginning with adenine. Catalyzes the conversion of L-threonine, HCO(3)(-)/CO(2) and ATP to give threonylcarbamoyl-AMP (TC-AMP) as the acyladenylate intermediate, with the release of diphosphate. This chain is Threonylcarbamoyl-AMP synthase, found in Aeromonas salmonicida (strain A449).